Consider the following 573-residue polypeptide: Sulfate adenylyltransferase (573 aa).

The interval 1–169 (MANPPHGGIL…VEAVNKLNHY (169 aa)) is N-terminal. The catalytic stretch occupies residues 170-394 (DYVGLRFTPA…LRESNPPRSK (225 aa)). Residue Gln-197 coordinates sulfate. ATP contacts are provided by residues 197-200 (QTRN) and 291-294 (GRDH). Active-site residues include Thr-198, Arg-199, and Asn-200. Arg-199 contacts sulfate. Ala-295 provides a ligand contact to sulfate. Leu-333 contributes to the ATP binding site. The interval 395–573 (QGFTVFLTGY…LESQGFLEKA (179 aa)) is allosteric regulation domain; adenylyl-sulfate kinase-like. 3'-phosphoadenylyl sulfate is bound by residues 434–437 (DTVR), Arg-451, 477–478 (IA), and Arg-515.

In the N-terminal section; belongs to the sulfate adenylyltransferase family. The protein in the C-terminal section; belongs to the APS kinase family. As to quaternary structure, homohexamer. Dimer of trimers.

The protein resides in the cytoplasm. It catalyses the reaction sulfate + ATP + H(+) = adenosine 5'-phosphosulfate + diphosphate. It participates in sulfur metabolism; hydrogen sulfide biosynthesis; sulfite from sulfate: step 1/3. Its activity is regulated as follows. Allosterically inhibited by 3'-phosphoadenosine 5'-phosphosulfate (PAPS). Functionally, catalyzes the first intracellular reaction of sulfate assimilation, forming adenosine-5'-phosphosulfate (APS) from inorganic sulfate and ATP. Plays an important role in sulfate activation as a component of the biosynthesis pathway of sulfur-containing amino acids. The chain is Sulfate adenylyltransferase from Coccidioides immitis (strain RS) (Valley fever fungus).